A 963-amino-acid chain; its full sequence is Translation initiation factor IF-2 (963 aa).

The segment covering 53-77 (SHGQADDSARKKITLTKRETSEIRQ) has biased composition (basic and acidic residues). The disordered stretch occupies residues 53–377 (SHGQADDSAR…RSNFQAPTEP (325 aa)). The span at 78-87 (SDATGKTRTV) shows a compositional bias: polar residues. Basic and acidic residues-rich tracts occupy residues 98-110 (IKRD…HQAD), 123-183 (EEAR…KAEE), 197-250 (DTSR…EAEA), and 267-278 (PSERKAEEKKAE). A compositionally biased stretch (gly residues) spans 343–356 (SSGGVGGWRGGPRG). The 170-residue stretch at 463 to 632 (PRPPVVTVMG…SLQAEVLELK (170 aa)) folds into the tr-type G domain. The segment at 472 to 479 (GHVDHGKT) is G1. 472-479 (GHVDHGKT) is a binding site for GTP. The tract at residues 497 to 501 (GITQH) is G2. Positions 518–521 (DTPG) are G3. Residues 518–522 (DTPGH) and 572–575 (NKVD) each bind GTP. The interval 572–575 (NKVD) is G4. The segment at 608 to 610 (SAK) is G5.

This sequence belongs to the TRAFAC class translation factor GTPase superfamily. Classic translation factor GTPase family. IF-2 subfamily.

The protein localises to the cytoplasm. Functionally, one of the essential components for the initiation of protein synthesis. Protects formylmethionyl-tRNA from spontaneous hydrolysis and promotes its binding to the 30S ribosomal subunits. Also involved in the hydrolysis of GTP during the formation of the 70S ribosomal complex. The chain is Translation initiation factor IF-2 from Cupriavidus taiwanensis (strain DSM 17343 / BCRC 17206 / CCUG 44338 / CIP 107171 / LMG 19424 / R1) (Ralstonia taiwanensis (strain LMG 19424)).